Here is a 156-residue protein sequence, read N- to C-terminus: Deoxyuridine 5'-triphosphate nucleotidohydrolase (156 aa).

Residues 76–78 (RSG), N89, 93–95 (TVD), and K103 contribute to the substrate site.

This sequence belongs to the dUTPase family. Mg(2+) serves as cofactor.

It catalyses the reaction dUTP + H2O = dUMP + diphosphate + H(+). It functions in the pathway pyrimidine metabolism; dUMP biosynthesis; dUMP from dCTP (dUTP route): step 2/2. In terms of biological role, this enzyme is involved in nucleotide metabolism: it produces dUMP, the immediate precursor of thymidine nucleotides and it decreases the intracellular concentration of dUTP so that uracil cannot be incorporated into DNA. The sequence is that of Deoxyuridine 5'-triphosphate nucleotidohydrolase from Agrobacterium fabrum (strain C58 / ATCC 33970) (Agrobacterium tumefaciens (strain C58)).